Consider the following 245-residue polypeptide: Zinc finger CCCH domain-containing protein 54 (245 aa).

The C3H1-type zinc-finger motif lies at 92-119; that stretch reads TYCAVACPAFRNGACHRGDSCEFAHGVF. A disordered region spans residues 175–204; it reads GNGDGVTMRMDDEGYDTSRSPVRSGKDDLD.

As to quaternary structure, interacts with MARD1/FLZ9 and RD21A. In terms of tissue distribution, specifically expressed in embryo (at protein level).

It localises to the nucleus. Functionally, embryo-specific transcription factor required at the globular to heart stage transition in embryo development. The sequence is that of Zinc finger CCCH domain-containing protein 54 from Arabidopsis thaliana (Mouse-ear cress).